We begin with the raw amino-acid sequence, 218 residues long: Adapter protein MecA (218 aa).

Belongs to the MecA family. As to quaternary structure, homodimer.

Its function is as follows. Enables the recognition and targeting of unfolded and aggregated proteins to the ClpC protease or to other proteins involved in proteolysis. In Exiguobacterium sp. (strain ATCC BAA-1283 / AT1b), this protein is Adapter protein MecA.